Consider the following 201-residue polypeptide: Natural cytotoxicity triggering receptor 3 (201 aa).

An N-terminal signal peptide occupies residues 1–18; the sequence is MAWMLLLILIMVHPGSCA. The region spanning 19-126 is the Ig-like domain; sequence LWVSQPPEIR…VGTGNGTRLV (108 aa). Topologically, residues 19-135 are extracellular; it reads LWVSQPPEIR…VVEKEHPQLG (117 aa). Cysteines 39 and 108 form a disulfide. N-linked (GlcNAc...) asparagine glycosylation is found at Asn42 and Asn121. Residues 136 to 156 form a helical membrane-spanning segment; that stretch reads AGTVLLLRAGFYAVSFLSVAV. Topologically, residues 157-201 are cytoplasmic; the sequence is GSTVYYQGKCLTWKGPRRQLPAVVPAPLPPPCGSSAQLLPPVPGG.

Belongs to the natural cytotoxicity receptor (NCR) family. Homodimer in the unliganted form. Interacts with CD3Z. Interacts with and is activated by binding to NCR3LG1. Interacts with and is activated by binding to BAG6. Interacts with and is inhibited by binding to LGALS3.

The protein localises to the cell membrane. Cell membrane receptor of natural killer/NK cells that is activated by binding of extracellular ligands including BAG6 and NCR3LG1. Stimulates NK cells cytotoxicity toward neighboring cells producing these ligands. It controls, for instance, NK cells cytotoxicity against tumor cells. Engagement of NCR3 by BAG6 also promotes myeloid dendritic cells (DC) maturation, both through killing DCs that did not acquire a mature phenotype, and inducing the release by NK cells of TNFA and IFNG that promote DC maturation. This chain is Natural cytotoxicity triggering receptor 3 (NCR3), found in Pan troglodytes (Chimpanzee).